Reading from the N-terminus, the 444-residue chain is Elongation factor 1-alpha (444 aa).

In terms of domain architecture, tr-type G spans 15 to 236 (KPHINLAVVG…VLDTFQPPPR (222 aa)). Residues 24–31 (GHVDNGKS) form a G1 region. Position 24–31 (24–31 (GHVDNGKS)) interacts with GTP. Ser31 serves as a coordination point for Mg(2+). The segment at 80 to 84 (GVTIE) is G2. Positions 101-104 (DLPG) are G3. Residues 101 to 105 (DLPGH) and 163 to 166 (NKMD) contribute to the GTP site. Residues 163 to 166 (NKMD) form a G4 region. Positions 202 to 204 (SAI) are G5.

This sequence belongs to the TRAFAC class translation factor GTPase superfamily. Classic translation factor GTPase family. EF-Tu/EF-1A subfamily.

The protein resides in the cytoplasm. The enzyme catalyses GTP + H2O = GDP + phosphate + H(+). GTP hydrolase that promotes the GTP-dependent binding of aminoacyl-tRNA to the A-site of ribosomes during protein biosynthesis. This Pyrobaculum calidifontis (strain DSM 21063 / JCM 11548 / VA1) protein is Elongation factor 1-alpha.